Reading from the N-terminus, the 318-residue chain is Isoeugenol synthase 1 (318 aa).

Residues Thr10–Ile13, Ala32–Ser43, Arg33, Val84–Met86, Ser109–Phe111, Lys131, and Asn151–Phe153 each bind NADP(+). The active-site Proton donor/acceptor is the Lys131. Pro260 lines the substrate pocket.

It belongs to the NmrA-type oxidoreductase family. As to expression, mostly expressed in petals, and, to a lower extent, in sepals, stamens and pistils.

It catalyses the reaction (E)-isoeugenol + acetate + NADP(+) = (E)-coniferyl acetate + NADPH. The protein operates within aromatic compound metabolism; phenylpropanoid biosynthesis. Catalyzes the synthesis of the phenylpropene isoeugenol from coniferyl acetate. Phenylpropenes are the primary constituents of various essential plant oils. They are produced as antimicrobial and antianimal compounds, or as floral attractants of pollinators. Isoeugenol is a characteristic aromatic constituent of spices and a floral volatile compound. This is Isoeugenol synthase 1 from Clarkia breweri (Fairy fans).